We begin with the raw amino-acid sequence, 228 residues long: Superoxide dismutase [Mn], mitochondrial (228 aa).

The N-terminal 24 residues, 1–24 (MALRTLVSRRTLATGLGFRQQLRG), are a transit peptide targeting the mitochondrion. 4 residues coordinate Mn(2+): His-52, His-100, Asp-189, and His-193.

Belongs to the iron/manganese superoxide dismutase family. In terms of assembly, homotetramer. Requires Mn(2+) as cofactor.

The protein localises to the mitochondrion matrix. The catalysed reaction is 2 superoxide + 2 H(+) = H2O2 + O2. Destroys superoxide anion radicals which are normally produced within the cells and which are toxic to biological systems. The chain is Superoxide dismutase [Mn], mitochondrial (SODA) from Nicotiana plumbaginifolia (Leadwort-leaved tobacco).